The chain runs to 309 residues: Homoserine O-succinyltransferase (309 aa).

C142 functions as the Acyl-thioester intermediate in the catalytic mechanism. The substrate site is built by K163 and S192. Catalysis depends on H235, which acts as the Proton acceptor. E237 is a catalytic residue. Position 249 (R249) interacts with substrate.

It belongs to the MetA family.

The protein resides in the cytoplasm. It catalyses the reaction L-homoserine + succinyl-CoA = O-succinyl-L-homoserine + CoA. Its pathway is amino-acid biosynthesis; L-methionine biosynthesis via de novo pathway; O-succinyl-L-homoserine from L-homoserine: step 1/1. Its function is as follows. Transfers a succinyl group from succinyl-CoA to L-homoserine, forming succinyl-L-homoserine. This Cronobacter sakazakii (strain ATCC BAA-894) (Enterobacter sakazakii) protein is Homoserine O-succinyltransferase.